The chain runs to 275 residues: Large ribosomal subunit protein uL2 (275 aa).

The segment at 221–275 (RGSAMTPRDHPHGGGEGKAPRGMPPKTPWGKPALGKRTRRNKKSDRFIIRRRYEA) is disordered. Positions 227–239 (PRDHPHGGGEGKA) are enriched in basic and acidic residues. Residues 254-263 (LGKRTRRNKK) are compositionally biased toward basic residues. Residues 264–275 (SDRFIIRRRYEA) show a composition bias toward basic and acidic residues.

The protein belongs to the universal ribosomal protein uL2 family. Part of the 50S ribosomal subunit. Forms a bridge to the 30S subunit in the 70S ribosome.

Its function is as follows. One of the primary rRNA binding proteins. Required for association of the 30S and 50S subunits to form the 70S ribosome, for tRNA binding and peptide bond formation. It has been suggested to have peptidyltransferase activity; this is somewhat controversial. Makes several contacts with the 16S rRNA in the 70S ribosome. The sequence is that of Large ribosomal subunit protein uL2 from Thermomicrobium roseum (strain ATCC 27502 / DSM 5159 / P-2).